The following is a 148-amino-acid chain: 3-dehydroquinate dehydratase (148 aa).

The Proton acceptor role is filled by tyrosine 23. The substrate site is built by asparagine 74, histidine 80, and aspartate 87. Residue histidine 100 is the Proton donor of the active site. Residues 101-102 (IS) and arginine 111 contribute to the substrate site.

Belongs to the type-II 3-dehydroquinase family. As to quaternary structure, homododecamer.

The catalysed reaction is 3-dehydroquinate = 3-dehydroshikimate + H2O. Its pathway is metabolic intermediate biosynthesis; chorismate biosynthesis; chorismate from D-erythrose 4-phosphate and phosphoenolpyruvate: step 3/7. Catalyzes a trans-dehydration via an enolate intermediate. The chain is 3-dehydroquinate dehydratase from Caldanaerobacter subterraneus subsp. tengcongensis (strain DSM 15242 / JCM 11007 / NBRC 100824 / MB4) (Thermoanaerobacter tengcongensis).